A 72-amino-acid polypeptide reads, in one-letter code: uncharacterized protein (72 aa).

It belongs to the baculoviridae 8 kDa protein family.

This is an uncharacterized protein from Orgyia pseudotsugata (Douglas-fir tussock moth).